The sequence spans 113 residues: Large ribosomal subunit protein bL17 (113 aa).

This sequence belongs to the bacterial ribosomal protein bL17 family. Part of the 50S ribosomal subunit. Contacts protein L32.

This chain is Large ribosomal subunit protein bL17, found in Syntrophomonas wolfei subsp. wolfei (strain DSM 2245B / Goettingen).